The following is a 185-amino-acid chain: Probable NEDD8-conjugating enzyme Ubc12-like (185 aa).

Positions 8–29 are disordered; it reads KEKQREESQSNNGRGASTVKKQ. Residues 16–28 show a composition bias toward polar residues; that stretch reads QSNNGRGASTVKK. The UBC core domain occupies 31–176; it reads AGELRLHKDI…VRRAMMGGQV (146 aa). Cys-114 serves as the catalytic Glycyl thioester intermediate.

This sequence belongs to the ubiquitin-conjugating enzyme family. UBC12 subfamily.

It functions in the pathway protein modification; protein neddylation. Its function is as follows. Accepts the ubiquitin-like protein NEDD8/RUB1 from the ECR1-AXR1 E1 complex and catalyzes its covalent attachment to other proteins. This Arabidopsis thaliana (Mouse-ear cress) protein is Probable NEDD8-conjugating enzyme Ubc12-like (RCE2).